The following is a 122-amino-acid chain: Serum amyloid A-3 protein (122 aa).

Positions 1–18 (MKLSIGIIFCFLILGVNS) are cleaved as a signal peptide. The interval 88–122 (GRGAEDSKADQEANQWGRSGNDPNHFRPKGLPDKY) is disordered. Over residues 99-109 (EANQWGRSGND) the composition is skewed to polar residues.

The protein belongs to the SAA family. As to expression, expressed by the liver; secreted in plasma. Expressed in synovial fibroblasts.

The protein localises to the secreted. In terms of biological role, major acute phase reactant. Apolipoprotein of the HDL complex. In vitro exhibits antimicrobial activity against Escherichia coli, Streptococcus uberis and Pseudomonas aeruginosa. This chain is Serum amyloid A-3 protein (SAA3), found in Oryctolagus cuniculus (Rabbit).